A 138-amino-acid polypeptide reads, in one-letter code: UPF0201 protein PYRAB09730 (138 aa).

This sequence belongs to the UPF0201 family.

The chain is UPF0201 protein PYRAB09730 from Pyrococcus abyssi (strain GE5 / Orsay).